The primary structure comprises 144 residues: Maximins 4/H3 type 2 (144 aa).

The N-terminal stretch at 1–18 is a signal peptide; that stretch reads MNFKYIIAVSFFIASAYA. The propeptide occupies 19–43; that stretch reads RRNEKDVQSLSQRDVLEEESLREIR. N70 is subject to Asparagine amide. Positions 74–123 are excised as a propeptide; that stretch reads TAEDHEVMKRLEAVMRDLDSLDHPEEASERETRGFNQEEIANLFTKKEKR. At I143 the chain carries Isoleucine amide.

Belongs to the bombinin family. In terms of tissue distribution, expressed by the skin glands.

The protein resides in the secreted. Functionally, maximin-4 shows antibacterial activity against both Gram-positive and Gram-negative bacteria. It also shows antimicrobial activity against the fungus C.albicans, but not against A.flavus nor P.uticale. It has little hemolytic activity. It does not possess a significant cytotoxicity against tumor cell lines. It does not possess a significant anti-HIV activity. Its function is as follows. Maximin-H3 shows antibacterial activity against both Gram-positive and Gram-negative bacteria. It also shows antimicrobial activity against the fungus C.albicans. Shows strong hemolytic activity. The sequence is that of Maximins 4/H3 type 2 from Bombina maxima (Giant fire-bellied toad).